Here is a 133-residue protein sequence, read N- to C-terminus: Large ribosomal subunit protein uL15 (133 aa).

Residues 1 to 60 are disordered; sequence MALENLKPAQGSTKDRKRVGRGQGSGMGKTSTRGGKGQTARTGYKAKRGFEGGQQPLQRR.

The protein belongs to the universal ribosomal protein uL15 family. As to quaternary structure, part of the 50S ribosomal subunit.

In terms of biological role, binds to the 23S rRNA. This Wolinella succinogenes (strain ATCC 29543 / DSM 1740 / CCUG 13145 / JCM 31913 / LMG 7466 / NCTC 11488 / FDC 602W) (Vibrio succinogenes) protein is Large ribosomal subunit protein uL15.